A 449-amino-acid chain; its full sequence is UDP-N-acetylmuramoylalanine--D-glutamate ligase (449 aa).

An ATP-binding site is contributed by 113 to 119 (GTNGKTT).

The protein belongs to the MurCDEF family.

It localises to the cytoplasm. It catalyses the reaction UDP-N-acetyl-alpha-D-muramoyl-L-alanine + D-glutamate + ATP = UDP-N-acetyl-alpha-D-muramoyl-L-alanyl-D-glutamate + ADP + phosphate + H(+). It participates in cell wall biogenesis; peptidoglycan biosynthesis. Its function is as follows. Cell wall formation. Catalyzes the addition of glutamate to the nucleotide precursor UDP-N-acetylmuramoyl-L-alanine (UMA). This is UDP-N-acetylmuramoylalanine--D-glutamate ligase from Microcystis aeruginosa (strain NIES-843 / IAM M-2473).